We begin with the raw amino-acid sequence, 359 residues long: Peptide chain release factor 1 (359 aa).

Q236 carries the post-translational modification N5-methylglutamine.

Belongs to the prokaryotic/mitochondrial release factor family. Methylated by PrmC. Methylation increases the termination efficiency of RF1.

The protein resides in the cytoplasm. Functionally, peptide chain release factor 1 directs the termination of translation in response to the peptide chain termination codons UAG and UAA. The chain is Peptide chain release factor 1 from Streptococcus pneumoniae serotype 4 (strain ATCC BAA-334 / TIGR4).